The following is a 621-amino-acid chain: Threonine--tRNA ligase (621 aa).

The tract at residues 1–137 is editing domain; the sequence is MRILQLHCDS…ESSKVVTKDS (137 aa). The tract at residues 128-150 is disordered; the sequence is ESSKVVTKDSTTKDDDEDTSDAL. The interval 202-501 is catalytic; sequence PHVALMKKLA…SKKGKKPQLP (300 aa). Zn(2+) contacts are provided by Cys294, His346, and His470. A compositionally biased stretch (polar residues) spans 598–612; sequence QTSGKPYTGLNQSQH. A disordered region spans residues 598–621; it reads QTSGKPYTGLNQSQHLSKRPQLMV.

It belongs to the class-II aminoacyl-tRNA synthetase family. Homodimer. Requires Zn(2+) as cofactor.

The protein localises to the cytoplasm. The catalysed reaction is tRNA(Thr) + L-threonine + ATP = L-threonyl-tRNA(Thr) + AMP + diphosphate + H(+). In terms of biological role, catalyzes the attachment of threonine to tRNA(Thr) in a two-step reaction: L-threonine is first activated by ATP to form Thr-AMP and then transferred to the acceptor end of tRNA(Thr). Also edits incorrectly charged L-seryl-tRNA(Thr). This chain is Threonine--tRNA ligase, found in Nitrosopumilus maritimus (strain SCM1).